Here is a 126-residue protein sequence, read N- to C-terminus: Holo-[acyl-carrier-protein] synthase (126 aa).

Mg(2+) is bound by residues D9 and E58.

This sequence belongs to the P-Pant transferase superfamily. AcpS family. It depends on Mg(2+) as a cofactor.

The protein localises to the cytoplasm. The catalysed reaction is apo-[ACP] + CoA = holo-[ACP] + adenosine 3',5'-bisphosphate + H(+). Its function is as follows. Transfers the 4'-phosphopantetheine moiety from coenzyme A to a Ser of acyl-carrier-protein. This Escherichia coli (strain K12 / MC4100 / BW2952) protein is Holo-[acyl-carrier-protein] synthase.